The primary structure comprises 597 residues: Phosphomethylpyrimidine synthase (597 aa).

Residues N207, M236, Y265, H301, 321–323 (SRG), 362–365 (DGLR), and E401 contribute to the substrate site. Residue H405 participates in Zn(2+) binding. Residue Y428 coordinates substrate. H469 is a binding site for Zn(2+). Residues C549, C552, and C557 each coordinate [4Fe-4S] cluster.

This sequence belongs to the ThiC family. In terms of assembly, homodimer. Requires [4Fe-4S] cluster as cofactor.

It carries out the reaction 5-amino-1-(5-phospho-beta-D-ribosyl)imidazole + S-adenosyl-L-methionine = 4-amino-2-methyl-5-(phosphooxymethyl)pyrimidine + CO + 5'-deoxyadenosine + formate + L-methionine + 3 H(+). The protein operates within cofactor biosynthesis; thiamine diphosphate biosynthesis. In terms of biological role, catalyzes the synthesis of the hydroxymethylpyrimidine phosphate (HMP-P) moiety of thiamine from aminoimidazole ribotide (AIR) in a radical S-adenosyl-L-methionine (SAM)-dependent reaction. In Gluconobacter oxydans (strain 621H) (Gluconobacter suboxydans), this protein is Phosphomethylpyrimidine synthase.